Here is a 188-residue protein sequence, read N- to C-terminus: MVEIFNYSTSVYEKHSSTNKLVNDFRKEIQMEGAAIRDIAKHAQILDMTPKPSALSTLMQTNKKTCWASFSPPTNFHKQRFSTPYLVPSLGSPDKQDQDMEKISSYLKVLTRGKFSYRSTADTLSRKNKRSSDQKRNGQHFEQEELEVEEEVLVREGTVLLRALDQGIKSSNLLIDYVISRIFQFVQG.

The segment at 121-142 (ADTLSRKNKRSSDQKRNGQHFE) is disordered. Over residues 130–142 (RSSDQKRNGQHFE) the composition is skewed to basic and acidic residues.

It belongs to the chlamydial CPn_0422/CT_273/TC_0545 family.

This is an uncharacterized protein from Chlamydia trachomatis serovar D (strain ATCC VR-885 / DSM 19411 / UW-3/Cx).